Reading from the N-terminus, the 488-residue chain is Bifunctional protein GlmU (488 aa).

The interval 1–237 is pyrophosphorylase; it reads MPRTRTPLAA…AEEASGVNDR (237 aa). UDP-N-acetyl-alpha-D-glucosamine-binding positions include 13–16, lysine 27, glutamine 82, 87–88, 110–112, glycine 149, glutamate 164, asparagine 179, and asparagine 235; these read LAAG, GT, and SGD. A Mg(2+)-binding site is contributed by aspartate 112. A Mg(2+)-binding site is contributed by asparagine 235. The segment at 238 to 258 is linker; sequence VELSRANRVMVGRLAEAFMRA. The N-acetyltransferase stretch occupies residues 259–488; it reads GVTIEDPARF…KGRPAARRAS (230 aa). Residues arginine 341 and lysine 359 each contribute to the UDP-N-acetyl-alpha-D-glucosamine site. Histidine 371 (proton acceptor) is an active-site residue. Tyrosine 374 and asparagine 385 together coordinate UDP-N-acetyl-alpha-D-glucosamine. Residues alanine 388, 394–395, serine 413, alanine 431, and arginine 448 contribute to the acetyl-CoA site; that span reads NY. Residues 459-488 form a disordered region; the sequence is AQRQAEKQMKGTATGPASARKGRPAARRAS. Positions 478 to 488 are enriched in basic residues; it reads RKGRPAARRAS.

In the N-terminal section; belongs to the N-acetylglucosamine-1-phosphate uridyltransferase family. The protein in the C-terminal section; belongs to the transferase hexapeptide repeat family. As to quaternary structure, homotrimer. Mg(2+) is required as a cofactor.

Its subcellular location is the cytoplasm. The catalysed reaction is alpha-D-glucosamine 1-phosphate + acetyl-CoA = N-acetyl-alpha-D-glucosamine 1-phosphate + CoA + H(+). It catalyses the reaction N-acetyl-alpha-D-glucosamine 1-phosphate + UTP + H(+) = UDP-N-acetyl-alpha-D-glucosamine + diphosphate. It functions in the pathway nucleotide-sugar biosynthesis; UDP-N-acetyl-alpha-D-glucosamine biosynthesis; N-acetyl-alpha-D-glucosamine 1-phosphate from alpha-D-glucosamine 6-phosphate (route II): step 2/2. Its pathway is nucleotide-sugar biosynthesis; UDP-N-acetyl-alpha-D-glucosamine biosynthesis; UDP-N-acetyl-alpha-D-glucosamine from N-acetyl-alpha-D-glucosamine 1-phosphate: step 1/1. The protein operates within bacterial outer membrane biogenesis; LPS lipid A biosynthesis. Its function is as follows. Catalyzes the last two sequential reactions in the de novo biosynthetic pathway for UDP-N-acetylglucosamine (UDP-GlcNAc). The C-terminal domain catalyzes the transfer of acetyl group from acetyl coenzyme A to glucosamine-1-phosphate (GlcN-1-P) to produce N-acetylglucosamine-1-phosphate (GlcNAc-1-P), which is converted into UDP-GlcNAc by the transfer of uridine 5-monophosphate (from uridine 5-triphosphate), a reaction catalyzed by the N-terminal domain. This chain is Bifunctional protein GlmU, found in Anaeromyxobacter dehalogenans (strain 2CP-1 / ATCC BAA-258).